The sequence spans 185 residues: Elongation factor P (185 aa).

Belongs to the elongation factor P family.

The protein resides in the cytoplasm. It participates in protein biosynthesis; polypeptide chain elongation. Functionally, involved in peptide bond synthesis. Stimulates efficient translation and peptide-bond synthesis on native or reconstituted 70S ribosomes in vitro. Probably functions indirectly by altering the affinity of the ribosome for aminoacyl-tRNA, thus increasing their reactivity as acceptors for peptidyl transferase. The chain is Elongation factor P from Finegoldia magna (strain ATCC 29328 / DSM 20472 / WAL 2508) (Peptostreptococcus magnus).